The chain runs to 346 residues: Peripherin-2 (346 aa).

At 1–24 the chain is on the cytoplasmic side; it reads MALLKVKFDQKKRVKLAQGLWLMN. Residues 25–43 traverse the membrane as a helical segment; the sequence is WLSVLAGIVLFSLGLFLKI. At 44 to 61 the chain is on the lumenal side; it reads ELRKRSEVMNNSESHFVP. A glycan (N-linked (GlcNAc...) asparagine) is linked at Asn-53. The chain crosses the membrane as a helical span at residues 62 to 80; the sequence is NSLIGVGVLSCVFNSLAGK. At 81-99 the chain is on the cytoplasmic side; that stretch reads ICYDALDPAKYAKWKPWLK. A helical membrane pass occupies residues 100 to 123; it reads PYLAVCIFFNVILFLVALCCFLLR. Residues 124-264 lie on the Lumenal side of the membrane; sequence GSLESTLAYG…LNYYSSLMNS (141 aa). N-linked (GlcNAc...) asparagine glycosylation occurs at Asn-229. A helical transmembrane segment spans residues 265–290; it reads MGVVTLLVWLFEVSITAGLRYLHTAL. Over 291-346 the chain is Cytoplasmic; it reads ESVSNPEDPECESEGWLLEKSVPETWKAFLESFKKLGKSNQVEAEGADAGPAPEAG. The tract at residues 341-346 is interaction with MREG; the sequence is PAPEAG.

It belongs to the PRPH2/ROM1 family. Homodimer; disulfide-linked. Forms a homotetramer. Forms a heterotetramer with ROM1. Homotetramer and heterotetramer core complexes go on to form higher order complexes by formation of intermolecular disulfide bonds. Interacts with MREG. Interacts with STX3 isoform 3B. Interacts with SNAP25. As to expression, expressed in the retina (at protein level).

The protein resides in the membrane. The protein localises to the cell projection. It is found in the cilium. It localises to the photoreceptor outer segment. Its subcellular location is the photoreceptor inner segment. Functionally, essential for retina photoreceptor outer segment disk morphogenesis, may also play a role with ROM1 in the maintenance of outer segment disk structure. Required for the maintenance of retinal outer nuclear layer thickness. Required for the correct development and organization of the photoreceptor inner segment. This Mus musculus (Mouse) protein is Peripherin-2 (Prph2).